A 113-amino-acid chain; its full sequence is MHELSLCEGILQILEEQSRTQGFIQVHRVCLEIGALASVEPEALRFHFDVVTQGTLAEGSHLEIVTVPAQAWCLPCGEKVSVGQYFDACPQCGSRQLQVIAGEELRIQQLEVE.

His2 serves as a coordination point for Ni(2+). The Zn(2+) site is built by Cys73, Cys76, Cys89, and Cys92.

Belongs to the HypA/HybF family.

Its function is as follows. Involved in the maturation of [NiFe] hydrogenases. Required for nickel insertion into the metal center of the hydrogenase. The sequence is that of Hydrogenase maturation factor HypA from Acidithiobacillus ferrooxidans (strain ATCC 23270 / DSM 14882 / CIP 104768 / NCIMB 8455) (Ferrobacillus ferrooxidans (strain ATCC 23270)).